Reading from the N-terminus, the 688-residue chain is Elongation factor G (688 aa).

In terms of domain architecture, tr-type G spans 8–282 (EKFRNFGIMA…GVVDYLPSPL (275 aa)). GTP is bound by residues 17–24 (AHIDAGKT), 81–85 (DTPGH), and 135–138 (NKMD).

This sequence belongs to the TRAFAC class translation factor GTPase superfamily. Classic translation factor GTPase family. EF-G/EF-2 subfamily.

It is found in the cytoplasm. In terms of biological role, catalyzes the GTP-dependent ribosomal translocation step during translation elongation. During this step, the ribosome changes from the pre-translocational (PRE) to the post-translocational (POST) state as the newly formed A-site-bound peptidyl-tRNA and P-site-bound deacylated tRNA move to the P and E sites, respectively. Catalyzes the coordinated movement of the two tRNA molecules, the mRNA and conformational changes in the ribosome. This chain is Elongation factor G, found in Clostridium perfringens (strain 13 / Type A).